The following is a 133-amino-acid chain: ATP synthase epsilon chain, chloroplastic (133 aa).

It belongs to the ATPase epsilon chain family. F-type ATPases have 2 components, CF(1) - the catalytic core - and CF(0) - the membrane proton channel. CF(1) has five subunits: alpha(3), beta(3), gamma(1), delta(1), epsilon(1). CF(0) has three main subunits: a, b and c.

It localises to the plastid. The protein localises to the chloroplast thylakoid membrane. Produces ATP from ADP in the presence of a proton gradient across the membrane. In Trieres chinensis (Marine centric diatom), this protein is ATP synthase epsilon chain, chloroplastic.